A 201-amino-acid polypeptide reads, in one-letter code: Holliday junction branch migration complex subunit RuvA (201 aa).

The interval 1-63 (MIAFVSGTVA…EDSLTLYGFA (63 aa)) is domain I. Residues 64 to 139 (DDDERQVFEL…RLGEPIGAPA (76 aa)) form a domain II region. A flexible linker region spans residues 139–143 (AVGAP). A domain III region spans residues 144–201 (VSTGWRDQLHAALIGLGYATREADEAVSAVAPQAEAAGGTPQVGALLKAALQTLNRAR).

It belongs to the RuvA family. In terms of assembly, homotetramer. Forms an RuvA(8)-RuvB(12)-Holliday junction (HJ) complex. HJ DNA is sandwiched between 2 RuvA tetramers; dsDNA enters through RuvA and exits via RuvB. An RuvB hexamer assembles on each DNA strand where it exits the tetramer. Each RuvB hexamer is contacted by two RuvA subunits (via domain III) on 2 adjacent RuvB subunits; this complex drives branch migration. In the full resolvosome a probable DNA-RuvA(4)-RuvB(12)-RuvC(2) complex forms which resolves the HJ.

The protein resides in the cytoplasm. In terms of biological role, the RuvA-RuvB-RuvC complex processes Holliday junction (HJ) DNA during genetic recombination and DNA repair, while the RuvA-RuvB complex plays an important role in the rescue of blocked DNA replication forks via replication fork reversal (RFR). RuvA specifically binds to HJ cruciform DNA, conferring on it an open structure. The RuvB hexamer acts as an ATP-dependent pump, pulling dsDNA into and through the RuvAB complex. HJ branch migration allows RuvC to scan DNA until it finds its consensus sequence, where it cleaves and resolves the cruciform DNA. In Streptomyces coelicolor (strain ATCC BAA-471 / A3(2) / M145), this protein is Holliday junction branch migration complex subunit RuvA.